The sequence spans 90 residues: Small ribosomal subunit protein bS16 (90 aa).

It belongs to the bacterial ribosomal protein bS16 family.

The sequence is that of Small ribosomal subunit protein bS16 from Shouchella clausii (strain KSM-K16) (Alkalihalobacillus clausii).